Here is a 316-residue protein sequence, read N- to C-terminus: DNA-directed RNA polymerase III subunit RPC6 (316 aa).

A2 is modified (N-acetylalanine). Residues K5 and K7 each participate in a glycyl lysine isopeptide (Lys-Gly) (interchain with G-Cter in SUMO2) cross-link. C287, C290, C296, and C307 together coordinate [4Fe-4S] cluster.

This sequence belongs to the eukaryotic RPC34/RPC39 RNA polymerase subunit family. Component of the RNA polymerase III complex consisting of 17 subunits: a ten-subunit horseshoe-shaped catalytic core composed of POLR3A/RPC1, POLR3B/RPC2, POLR1C/RPAC1, POLR1D/RPAC2, POLR3K/RPC10, POLR2E/RPABC1, POLR2F/RPABC2, POLR2H/RPABC3, POLR2K/RPABC4 and POLR2L/RPABC5; a mobile stalk composed of two subunits POLR3H/RPC8 and CRCP/RPC9, protruding from the core and functioning primarily in transcription initiation; and additional subunits homologous to general transcription factors of the RNA polymerase II machinery, POLR3C/RPC3-POLR3F/RPC6-POLR3G/RPC7 heterotrimer required for transcription initiation and POLR3D/RPC4-POLR3E/RPC5 heterodimer involved in both transcription initiation and termination. Directly interacts with POLR3C. Interacts with TBP and TFIIIB90 and GTF3C4. Interacts with MAF1. As part of the RNA polymerase III complex, interacts with PKP2.

It localises to the nucleus. Its function is as follows. DNA-dependent RNA polymerase catalyzes the transcription of DNA into RNA using the four ribonucleoside triphosphates as substrates. Specific peripheric component of RNA polymerase III (Pol III) which synthesizes small non-coding RNAs including 5S rRNA, snRNAs, tRNAs and miRNAs from at least 500 distinct genomic loci. Part of POLR3C/RPC3-POLR3F/RPC6-POLR3G/RPC7 heterotrimer that coordinates the dynamics of Pol III stalk and clamp modules during the transition from apo to elongation state. Pol III plays a key role in sensing and limiting infection by intracellular bacteria and DNA viruses, including varicella zoster virus. Acts as a nuclear and cytosolic DNA sensor detecting AT-rich DNA, involved in innate immune response. Can sense non-self dsDNA that serves as template for transcription into dsRNA. The non-self RNA polymerase III transcripts, such as Epstein-Barr virus-encoded RNAs (EBERs) induce type I interferon and NF-kappa-B through the RIG-I pathway. Preferentially binds double-stranded DNA (dsDNA). The sequence is that of DNA-directed RNA polymerase III subunit RPC6 from Mus musculus (Mouse).